Consider the following 412-residue polypeptide: AT-rich interactive domain-containing protein 3C (412 aa).

Low complexity predominate over residues 1 to 23 (MEALQKQQAARLAQGVGPLAPAC). The tract at residues 1–96 (MEALQKQQAA…SSQPPGLHPH (96 aa)) is disordered. Over residues 50-73 (AEEEEDAEEDEEKREEAGAEEEAA) the composition is skewed to acidic residues. The span at 78–87 (PGAQGPSSPS) shows a compositional bias: low complexity. One can recognise an ARID domain in the interval 113 to 205 (DPKRKEFLDD…YLYPYECETR (93 aa)). 2 disordered regions span residues 232–278 (TPLF…AHAC) and 388–412 (PVPA…SILP). A compositionally biased stretch (polar residues) spans 259–272 (TQSSPGPAQGSTSG). Positions 304–389 (LALGPTREKL…GVLFARRQPV (86 aa)) constitute an REKLES domain.

Interacts (via REKLES DOMAIN) with NPM1; the interaction mediates ARID3C nuclear shuttling.

It localises to the nucleus. Its function is as follows. Transcription factor involved in monocyte-to-macrophage differentiation. Forms a complex with NPM1 to translocate to the nucleus, acting as a transcription factor that promotes the expression of the genes involved in macrophage differentiation, such as STAT3, STAT1 and JUNB. In Homo sapiens (Human), this protein is AT-rich interactive domain-containing protein 3C.